The following is a 723-amino-acid chain: Catalase-peroxidase (723 aa).

The segment at residues 96-224 (WHAAGSYRVA…LAAVMMGLIY (129 aa)) is a cross-link (tryptophyl-tyrosyl-methioninium (Trp-Tyr) (with M-250)). His-97 (proton acceptor) is an active-site residue. Positions 224–250 (YVNPEGVDGQPDPLKTAQDVRVTFARM) form a cross-link, tryptophyl-tyrosyl-methioninium (Tyr-Met) (with W-96). His-265 lines the heme b pocket.

Belongs to the peroxidase family. Peroxidase/catalase subfamily. In terms of assembly, homodimer or homotetramer. The cofactor is heme b. Formation of the three residue Trp-Tyr-Met cross-link is important for the catalase, but not the peroxidase activity of the enzyme.

The catalysed reaction is H2O2 + AH2 = A + 2 H2O. It carries out the reaction 2 H2O2 = O2 + 2 H2O. Bifunctional enzyme with both catalase and broad-spectrum peroxidase activity. The chain is Catalase-peroxidase from Leptothrix cholodnii (strain ATCC 51168 / LMG 8142 / SP-6) (Leptothrix discophora (strain SP-6)).